The sequence spans 313 residues: Protoheme IX farnesyltransferase (313 aa).

The next 9 helical transmembrane spans lie at 33–53 (IALMKLRVVELLLVSTVPVML), 59–79 (MPSWWLIAVTLLAGTLSAGSA), 107–127 (VEPAQALRFGIALGIISTLMF), 129–149 (LLVNWTSAVLSVGAIAFYVFV), 162–182 (IVIGGAAGCFPVLIGWSAVTG), 188–208 (AVLLFAVVFFWTPPHFWALAI), 212–232 (DDYAAAGVPMLPVVATLEVVT), 252–272 (VADIGLVYLVPAVLLGAWFVA), and 292–312 (LFHMSITYLTLLFAALAAAAL).

Belongs to the UbiA prenyltransferase family. Protoheme IX farnesyltransferase subfamily.

The protein localises to the cell membrane. The enzyme catalyses heme b + (2E,6E)-farnesyl diphosphate + H2O = Fe(II)-heme o + diphosphate. The protein operates within porphyrin-containing compound metabolism; heme O biosynthesis; heme O from protoheme: step 1/1. Its function is as follows. Converts heme B (protoheme IX) to heme O by substitution of the vinyl group on carbon 2 of heme B porphyrin ring with a hydroxyethyl farnesyl side group. The chain is Protoheme IX farnesyltransferase from Parafrankia sp. (strain EAN1pec).